We begin with the raw amino-acid sequence, 111 residues long: Rho GDP-dissociation inhibitor 1 (111 aa).

Residues Lys57 and Lys60 each participate in a glycyl lysine isopeptide (Lys-Gly) (interchain with G-Cter in SUMO1); alternate cross-link. Glycyl lysine isopeptide (Lys-Gly) (interchain with G-Cter in SUMO2); alternate cross-links involve residues Lys57 and Lys60. Lys60 carries the post-translational modification N6-acetyllysine; alternate. Position 60 is an N6-succinyllysine; alternate (Lys60).

It belongs to the Rho GDI family. Monomer. Interacts with FER. Interacts with PLXNB3. Forms a heterodimer with RAC1. Interacts with RHOA, the affinity is increased by three orders of magnitude when RHOA is prenylated. Interacts with PSMD10; the interaction increases ARHGDIA association with RHOA, leading to ARHGDIA-mediated inactivation of RHOA and ROCK and prolonged AKT activation. Interacts with KANK2; the interaction is direct and may regulate the interaction of ARHGDIA with RHOA, RAC1 and CDC42. Interacts with RHOC. Interacts with CDC42. Interacts with NGFR (via death domain); NGFR binding decreases the affinity for RHOA. The N-terminus is blocked.

The protein resides in the cytoplasm. Functionally, controls Rho proteins homeostasis. Regulates the GDP/GTP exchange reaction of the Rho proteins by inhibiting the dissociation of GDP from them, and the subsequent binding of GTP to them. Retains Rho proteins such as CDC42, RAC1 and RHOA in an inactive cytosolic pool, regulating their stability and protecting them from degradation. Actively involved in the recycling and distribution of activated Rho GTPases in the cell, mediates extraction from membranes of both inactive and activated molecules due its exceptionally high affinity for prenylated forms. Through the modulation of Rho proteins, may play a role in cell motility regulation. In glioma cells, inhibits cell migration and invasion by mediating the signals of SEMA5A and PLXNB3 that lead to inactivation of RAC1. The chain is Rho GDP-dissociation inhibitor 1 (ARHGDIA) from Cavia porcellus (Guinea pig).